The primary structure comprises 223 residues: Ubiquitin carboxyl-terminal hydrolase isozyme L1 (223 aa).

N-acetylmethionine is present on M1. Residues 2–221 enclose the UCH catalytic domain; it reads QLKPMEINPE…VRFSAVALCK (220 aa). The interval 5-10 is interaction with ubiquitin; it reads PMEINP. Residue C90 is the Nucleophile of the active site. At S125 the chain carries Phosphoserine. The Proton donor role is filled by H161. An interaction with ubiquitin region spans residues 211–216; sequence EVRFSA. C220 carries S-farnesyl cysteine lipidation. Positions 221-223 are cleaved as a propeptide — removed in mature form; that stretch reads KAA.

This sequence belongs to the peptidase C12 family. As to quaternary structure, monomer. Homodimer. Interacts with COPS5 and SNCA. O-glycosylated. Expressed in brain, where it is found in neurons but not in oligodendrocytes or astrocytes. Found in the ganglion cell layer and the inner nuclear layer of the retina (at protein level). Expressed in brain and testis. In the brain, expression is at its lowest in replaceable neurons of hippocampus and olfactory bulb. Highly expressed in senescent pituitary. In skeletal muscle, primarily expressed in oxidative muscle fibers.

The protein resides in the cytoplasm. It is found in the endoplasmic reticulum membrane. The enzyme catalyses Thiol-dependent hydrolysis of ester, thioester, amide, peptide and isopeptide bonds formed by the C-terminal Gly of ubiquitin (a 76-residue protein attached to proteins as an intracellular targeting signal).. Functionally, deubiquitinase that plays a role in the regulation of several processes such as maintenance of synaptic function, cardiac function, inflammatory response or osteoclastogenesis. Abrogates the ubiquitination of multiple proteins including WWTR1/TAZ, EGFR, HIF1A and beta-site amyloid precursor protein cleaving enzyme 1/BACE1. In addition, recognizes and hydrolyzes a peptide bond at the C-terminal glycine of ubiquitin to maintain a stable pool of monoubiquitin that is a key requirement for the ubiquitin-proteasome and the autophagy-lysosome pathways. Regulates amyloid precursor protein/APP processing by promoting BACE1 degradation resulting in decreased amyloid beta production. Plays a role in the immune response by regulating the ability of MHC I molecules to reach cross-presentation compartments competent for generating Ag-MHC I complexes. Mediates the 'Lys-48'-linked deubiquitination of the transcriptional coactivator WWTR1/TAZ leading to its stabilization and inhibition of osteoclastogenesis. Deubiquitinates and stabilizes epidermal growth factor receptor EGFR to prevent its degradation and to activate its downstream mediators. Modulates oxidative activity in skeletal muscle by regulating key mitochondrial oxidative proteins. Enhances the activity of hypoxia-inducible factor 1-alpha/HIF1A by abrogateing its VHL E3 ligase-mediated ubiquitination and consequently inhibiting its degradation. This is Ubiquitin carboxyl-terminal hydrolase isozyme L1 (Uchl1) from Mus musculus (Mouse).